Consider the following 488-residue polypeptide: Ribulose bisphosphate carboxylase large chain (488 aa).

Substrate-binding residues include Asn-127 and Thr-177. Catalysis depends on Lys-179, which acts as the Proton acceptor. Residue Lys-181 coordinates substrate. Residues Lys-205, Asp-207, and Glu-208 each coordinate Mg(2+). Position 205 is an N6-carboxylysine (Lys-205). Catalysis depends on His-297, which acts as the Proton acceptor. Substrate is bound by residues Arg-298, His-330, and Ser-382.

Belongs to the RuBisCO large chain family. Type I subfamily. As to quaternary structure, heterohexadecamer of 8 large chains and 8 small chains. Mg(2+) is required as a cofactor.

Its subcellular location is the plastid. It localises to the chloroplast. It carries out the reaction 2 (2R)-3-phosphoglycerate + 2 H(+) = D-ribulose 1,5-bisphosphate + CO2 + H2O. The enzyme catalyses D-ribulose 1,5-bisphosphate + O2 = 2-phosphoglycolate + (2R)-3-phosphoglycerate + 2 H(+). RuBisCO catalyzes two reactions: the carboxylation of D-ribulose 1,5-bisphosphate, the primary event in carbon dioxide fixation, as well as the oxidative fragmentation of the pentose substrate in the photorespiration process. Both reactions occur simultaneously and in competition at the same active site. This Cyanidioschyzon merolae (strain NIES-3377 / 10D) (Unicellular red alga) protein is Ribulose bisphosphate carboxylase large chain.